A 289-amino-acid polypeptide reads, in one-letter code: Pantothenate synthetase (289 aa).

Residue 33–40 (MGYLHEGH) participates in ATP binding. His40 (proton donor) is an active-site residue. Gln70 contributes to the (R)-pantoate binding site. Gln70 contacts beta-alanine. Residue 157 to 160 (GEKD) participates in ATP binding. Gln163 serves as a coordination point for (R)-pantoate. Residues Val186 and 194-197 (LSSR) each bind ATP.

Belongs to the pantothenate synthetase family. As to quaternary structure, homodimer.

It is found in the cytoplasm. It catalyses the reaction (R)-pantoate + beta-alanine + ATP = (R)-pantothenate + AMP + diphosphate + H(+). It participates in cofactor biosynthesis; (R)-pantothenate biosynthesis; (R)-pantothenate from (R)-pantoate and beta-alanine: step 1/1. In terms of biological role, catalyzes the condensation of pantoate with beta-alanine in an ATP-dependent reaction via a pantoyl-adenylate intermediate. This chain is Pantothenate synthetase, found in Anaeromyxobacter dehalogenans (strain 2CP-C).